The following is a 139-amino-acid chain: Arsenate reductase (139 aa).

Active-site nucleophile residues include cysteine 10, cysteine 82, and cysteine 89. Cystine bridges form between cysteine 10-cysteine 82 and cysteine 82-cysteine 89.

Belongs to the low molecular weight phosphotyrosine protein phosphatase family. Thioredoxin-coupled ArsC subfamily.

The protein localises to the cytoplasm. It carries out the reaction arsenate + [thioredoxin]-dithiol + H(+) = arsenite + [thioredoxin]-disulfide + H2O. Catalyzes the reduction of arsenate [As(V)] to arsenite [As(III)]. This chain is Arsenate reductase, found in Bacillus licheniformis (strain ATCC 14580 / DSM 13 / JCM 2505 / CCUG 7422 / NBRC 12200 / NCIMB 9375 / NCTC 10341 / NRRL NRS-1264 / Gibson 46).